We begin with the raw amino-acid sequence, 637 residues long: MEYLAGNYDVIVVGAGHAGCEAALAAARMGGRTLLITLSLDNIAHMDCNPSLGGPAKGHLVREIDALGGQMGITADETSLQVRMLNTGKGPAVHALRIQSDKQAYHLHMRNAILGQENLVLHQALVERIKTEDGKVSGVVTRTGAFYAAPNVILTSGTYLRGRIIIGDAMYEGGPNGQQTAMNLSGALKELGLELGRFKTGTPPRIHRRSVDYTKFTVQPGDSVPWRYSFMPTQSMFWGRDVDKQIPCWLGYTTPETHQIIQDNIHRAPLYSGKIEGIGPRYCPSIEDKVVRFADRPTHQIFLEPEGWNSDELYVAGLSTSMPEEIQYDIIHSIPGLEKAELLRPGYAIEYDYVKPYQLSLSLEVRRIPGLFTAGQLNGTSGYEEAAAQGLLAGINAALRVQGKEPFIVRRSEGYLGVLIDDLVNKGVKEPYRLLTSRAEYRLILRQDNADLRLTPRGREVGLVKDERWAAFQKKKAAIAEINALWRGTTFSPLNEHLAEVLAGVHSAPVHGGISGEELMRRPEITINEIKQLIPQLAEYDEEALLEAGIEIKYAGYIEKQLAEIERFAKMEERMIPEEIVYDQIKGLSTEGRQRLKEVAPANMGQATRITGVTPADISVLLVYLEQKRRGGQIHAT.

14–19 (GAGHAG) is an FAD binding site. 279–293 (GPRYCPSIEDKVVRF) contacts NAD(+).

Belongs to the MnmG family. In terms of assembly, homodimer. Heterotetramer of two MnmE and two MnmG subunits. It depends on FAD as a cofactor.

Its subcellular location is the cytoplasm. Its function is as follows. NAD-binding protein involved in the addition of a carboxymethylaminomethyl (cmnm) group at the wobble position (U34) of certain tRNAs, forming tRNA-cmnm(5)s(2)U34. This is tRNA uridine 5-carboxymethylaminomethyl modification enzyme MnmG from Desulfitobacterium hafniense (strain Y51).